The primary structure comprises 471 residues: Adenosylhomocysteinase (471 aa).

Substrate is bound by residues Thr60, Asp135, and Glu196. 197–199 (TTT) serves as a coordination point for NAD(+). Residues Lys226 and Asp230 each contribute to the substrate site. NAD(+)-binding positions include Asn231, 260–265 (GYGDVG), Glu283, Asn318, 339–341 (IGH), and Asn387.

It belongs to the adenosylhomocysteinase family. NAD(+) serves as cofactor.

Its subcellular location is the cytoplasm. The enzyme catalyses S-adenosyl-L-homocysteine + H2O = L-homocysteine + adenosine. It participates in amino-acid biosynthesis; L-homocysteine biosynthesis; L-homocysteine from S-adenosyl-L-homocysteine: step 1/1. Its function is as follows. May play a key role in the regulation of the intracellular concentration of adenosylhomocysteine. This is Adenosylhomocysteinase from Chlorobium limicola (strain DSM 245 / NBRC 103803 / 6330).